A 231-amino-acid chain; its full sequence is Putative N-acetylmannosamine-6-phosphate 2-epimerase (231 aa).

It belongs to the NanE family.

It carries out the reaction an N-acyl-D-glucosamine 6-phosphate = an N-acyl-D-mannosamine 6-phosphate. Its pathway is amino-sugar metabolism; N-acetylneuraminate degradation; D-fructose 6-phosphate from N-acetylneuraminate: step 3/5. In terms of biological role, converts N-acetylmannosamine-6-phosphate (ManNAc-6-P) to N-acetylglucosamine-6-phosphate (GlcNAc-6-P). This Glaesserella parasuis serovar 5 (strain SH0165) (Haemophilus parasuis) protein is Putative N-acetylmannosamine-6-phosphate 2-epimerase.